We begin with the raw amino-acid sequence, 351 residues long: Phosphoribosylformylglycinamidine cyclo-ligase (351 aa).

Belongs to the AIR synthase family.

The protein resides in the cytoplasm. The catalysed reaction is 2-formamido-N(1)-(5-O-phospho-beta-D-ribosyl)acetamidine + ATP = 5-amino-1-(5-phospho-beta-D-ribosyl)imidazole + ADP + phosphate + H(+). It functions in the pathway purine metabolism; IMP biosynthesis via de novo pathway; 5-amino-1-(5-phospho-D-ribosyl)imidazole from N(2)-formyl-N(1)-(5-phospho-D-ribosyl)glycinamide: step 2/2. In Xylella fastidiosa (strain Temecula1 / ATCC 700964), this protein is Phosphoribosylformylglycinamidine cyclo-ligase.